A 315-amino-acid polypeptide reads, in one-letter code: 6-phosphogluconolactonase-like protein 2 (315 aa).

A phosphoserine mark is found at Ser-42 and Ser-64. The segment at 59–85 is disordered; the sequence is CKSTASAAEGKSGSSGSGSGSSKPKKE. A compositionally biased stretch (low complexity) spans 60–70; sequence KSTASAAEGKS.

It belongs to the glucosamine/galactosamine-6-phosphate isomerase family. 6-phosphogluconolactonase subfamily.

It is found in the cytoplasm. Its function is as follows. May be involved in regulation of tRNA subcellular distribution. The polypeptide is 6-phosphogluconolactonase-like protein 2 (SOL2) (Saccharomyces cerevisiae (strain ATCC 204508 / S288c) (Baker's yeast)).